We begin with the raw amino-acid sequence, 66 residues long: Small ribosomal subunit protein bS21 (66 aa).

It belongs to the bacterial ribosomal protein bS21 family.

The protein is Small ribosomal subunit protein bS21 of Rickettsia typhi (strain ATCC VR-144 / Wilmington).